A 411-amino-acid chain; its full sequence is Proteasome-activating nucleotidase 2 (411 aa).

Positions 35-75 form a coiled coil; the sequence is IVAVNGELQAQLDDVEARREELREEVNRLQRENETLKTASL. Residues 196 to 201 and H335 contribute to the ATP site; that span reads GTGKTM. The tract at residues 408–411 is docks into pockets in the proteasome alpha-ring to cause gate opening; it reads SYIQ.

This sequence belongs to the AAA ATPase family. As to quaternary structure, homohexamer. The hexameric complex has a two-ring architecture resembling a top hat that caps the 20S proteasome core at one or both ends. Upon ATP-binding, the C-terminus of PAN interacts with the alpha-rings of the proteasome core by binding to the intersubunit pockets.

It is found in the cytoplasm. In terms of biological role, ATPase which is responsible for recognizing, binding, unfolding and translocation of substrate proteins into the archaeal 20S proteasome core particle. Is essential for opening the gate of the 20S proteasome via an interaction with its C-terminus, thereby allowing substrate entry and access to the site of proteolysis. Thus, the C-termini of the proteasomal ATPase function like a 'key in a lock' to induce gate opening and therefore regulate proteolysis. Unfolding activity requires energy from ATP hydrolysis, whereas ATP binding alone promotes ATPase-20S proteasome association which triggers gate opening, and supports translocation of unfolded substrates. In Halobacterium salinarum (strain ATCC 700922 / JCM 11081 / NRC-1) (Halobacterium halobium), this protein is Proteasome-activating nucleotidase 2.